Here is a 343-residue protein sequence, read N- to C-terminus: UDP-3-O-acylglucosamine N-acyltransferase 2 (343 aa).

The active-site Proton acceptor is histidine 251.

This sequence belongs to the transferase hexapeptide repeat family. LpxD subfamily. As to quaternary structure, homotrimer.

The enzyme catalyses a UDP-3-O-[(3R)-3-hydroxyacyl]-alpha-D-glucosamine + a (3R)-hydroxyacyl-[ACP] = a UDP-2-N,3-O-bis[(3R)-3-hydroxyacyl]-alpha-D-glucosamine + holo-[ACP] + H(+). It functions in the pathway bacterial outer membrane biogenesis; LPS lipid A biosynthesis. Functionally, catalyzes the N-acylation of UDP-3-O-acylglucosamine using 3-hydroxyacyl-ACP as the acyl donor. Is involved in the biosynthesis of lipid A, a phosphorylated glycolipid that anchors the lipopolysaccharide to the outer membrane of the cell. The sequence is that of UDP-3-O-acylglucosamine N-acyltransferase 2 from Legionella pneumophila subsp. pneumophila (strain Philadelphia 1 / ATCC 33152 / DSM 7513).